The sequence spans 108 residues: Nucleoid-associated protein Mmwyl1_2533 (108 aa).

The interval 1–22 (MFKGGMGNMMRQAQQMQENMQK) is disordered. Polar residues predominate over residues 11–22 (RQAQQMQENMQK).

It belongs to the YbaB/EbfC family. Homodimer.

It is found in the cytoplasm. The protein resides in the nucleoid. Binds to DNA and alters its conformation. May be involved in regulation of gene expression, nucleoid organization and DNA protection. This is Nucleoid-associated protein Mmwyl1_2533 from Marinomonas sp. (strain MWYL1).